Reading from the N-terminus, the 1417-residue chain is Non-structural polyprotein 1AB (1417 aa).

Residues 105 to 143 (KLIHKANALQERLRLSQEEKATLALDVQFLQHENVRLKE) adopt a coiled-coil conformation. The next 5 helical transmembrane spans lie at 155–175 (MKWI…GGYA), 240–260 (VFYY…LAIG), 287–307 (VLPT…TLMV), 314–334 (LLAI…LCFM), and 345–365 (GLIA…LTGT). Residues H462, D490, and S552 each act as charge relay system; for serine protease activity in the active site. Positions 588–615 (VKAPSQVELLKEEIERLKAQLNSAAENP) form a coiled coil. Residue Y694 is modified to O-(5'-phospho-RNA)-tyrosine. The tract at residues 753-813 (NFDQAKPTPA…QKIEPQPYSQ (61 aa)) is disordered. Residues 784 to 796 (SQKKEKQPEHEQQ) show a composition bias toward basic and acidic residues. The RdRp catalytic domain maps to 1162 to 1288 (KHFIEFDWTR…TTPSVPDNYE (127 aa)).

It belongs to the astroviridae polyprotein 1AB family. Monomer. Post-translationally, cleaved by the viral and host proteases. The protease is probably autocatalytically cleaved.

The protein localises to the host membrane. It carries out the reaction RNA(n) + a ribonucleoside 5'-triphosphate = RNA(n+1) + diphosphate. Its function is as follows. Responsible for the cleavage of the polyprotein into functional products. Functionally, protein covalently attached to the 5' extremity of the genomic and subgenomic RNAs. It may serve as a primer for the replicase. This is Non-structural polyprotein 1AB (ORF1) from Human astrovirus-8 (HAstV-8).